Consider the following 431-residue polypeptide: Enolase (431 aa).

Gln-167 contacts (2R)-2-phosphoglycerate. Glu-209 (proton donor) is an active-site residue. Mg(2+)-binding residues include Asp-246, Glu-289, and Asp-316. The (2R)-2-phosphoglycerate site is built by Lys-341, Arg-370, Ser-371, and Lys-392. The active-site Proton acceptor is Lys-341.

Belongs to the enolase family. As to quaternary structure, component of the RNA degradosome, a multiprotein complex involved in RNA processing and mRNA degradation. It depends on Mg(2+) as a cofactor.

The protein resides in the cytoplasm. It localises to the secreted. It is found in the cell surface. It carries out the reaction (2R)-2-phosphoglycerate = phosphoenolpyruvate + H2O. Its pathway is carbohydrate degradation; glycolysis; pyruvate from D-glyceraldehyde 3-phosphate: step 4/5. Functionally, catalyzes the reversible conversion of 2-phosphoglycerate (2-PG) into phosphoenolpyruvate (PEP). It is essential for the degradation of carbohydrates via glycolysis. The sequence is that of Enolase from Shewanella sediminis (strain HAW-EB3).